A 227-amino-acid chain; its full sequence is UPF0758 protein lpl2409 (227 aa).

Residues R102–A225 enclose the MPN domain. 3 residues coordinate Zn(2+): H173, H175, and D186. Residues H173–D186 carry the JAMM motif motif.

This sequence belongs to the UPF0758 family.

The chain is UPF0758 protein lpl2409 from Legionella pneumophila (strain Lens).